The chain runs to 567 residues: UPF0313 protein CTN_0332 (567 aa).

Residues 288-560 (KAIETVKFSI…NKMKENVLFK (273 aa)) form the Radical SAM core domain. Cys-303, Cys-307, and Cys-310 together coordinate [4Fe-4S] cluster.

This sequence belongs to the UPF0313 family. [4Fe-4S] cluster is required as a cofactor.

The sequence is that of UPF0313 protein CTN_0332 from Thermotoga neapolitana (strain ATCC 49049 / DSM 4359 / NBRC 107923 / NS-E).